A 259-amino-acid chain; its full sequence is Histidinol-phosphatase (259 aa).

Mg(2+) contacts are provided by Glu-66, Asp-82, Ile-84, Asp-85, and Asp-207. Glu-66 contacts substrate. Substrate-binding positions include 84–87 (IDGT) and Asp-207.

The protein belongs to the inositol monophosphatase superfamily. Mg(2+) is required as a cofactor.

It catalyses the reaction L-histidinol phosphate + H2O = L-histidinol + phosphate. It functions in the pathway amino-acid biosynthesis; L-histidine biosynthesis; L-histidine from 5-phospho-alpha-D-ribose 1-diphosphate: step 8/9. Functionally, catalyzes the dephosphorylation of histidinol-phosphate to histidinol, the direct precursor of histidine. The sequence is that of Histidinol-phosphatase (hisN) from Chlorobaculum parvum (strain DSM 263 / NCIMB 8327) (Chlorobium vibrioforme subsp. thiosulfatophilum).